The primary structure comprises 590 residues: Aspartate--tRNA(Asp/Asn) ligase (590 aa).

Glu175 lines the L-aspartate pocket. The segment at 199–202 (QQYK) is aspartate. L-aspartate is bound by residues Arg221 and His450. ATP is bound at residue 221–223 (RDE). Glu484 serves as a coordination point for ATP. Arg491 contacts L-aspartate. Residue 536–539 (GVDR) coordinates ATP.

This sequence belongs to the class-II aminoacyl-tRNA synthetase family. Type 1 subfamily. As to quaternary structure, homodimer.

It is found in the cytoplasm. The catalysed reaction is tRNA(Asx) + L-aspartate + ATP = L-aspartyl-tRNA(Asx) + AMP + diphosphate. Its function is as follows. Aspartyl-tRNA synthetase with relaxed tRNA specificity since it is able to aspartylate not only its cognate tRNA(Asp) but also tRNA(Asn). Reaction proceeds in two steps: L-aspartate is first activated by ATP to form Asp-AMP and then transferred to the acceptor end of tRNA(Asp/Asn). This is Aspartate--tRNA(Asp/Asn) ligase from Bradyrhizobium sp. (strain ORS 278).